The sequence spans 434 residues: Enolase (434 aa).

Gln163 contributes to the (2R)-2-phosphoglycerate binding site. The Proton donor role is filled by Glu205. 3 residues coordinate Mg(2+): Asp242, Glu289, and Asp316. The (2R)-2-phosphoglycerate site is built by Lys341, Arg370, Ser371, and Lys392. The active-site Proton acceptor is the Lys341.

Belongs to the enolase family. Mg(2+) serves as cofactor.

It is found in the cytoplasm. Its subcellular location is the secreted. The protein localises to the cell surface. The enzyme catalyses (2R)-2-phosphoglycerate = phosphoenolpyruvate + H2O. It functions in the pathway carbohydrate degradation; glycolysis; pyruvate from D-glyceraldehyde 3-phosphate: step 4/5. Functionally, catalyzes the reversible conversion of 2-phosphoglycerate (2-PG) into phosphoenolpyruvate (PEP). It is essential for the degradation of carbohydrates via glycolysis. The protein is Enolase of Lacticaseibacillus casei (strain BL23) (Lactobacillus casei).